Consider the following 658-residue polypeptide: Glycogen debranching enzyme (658 aa).

Catalysis depends on aspartate 336, which acts as the Nucleophile. Glutamate 371 (proton donor) is an active-site residue. The disordered stretch occupies residues 459–484; the sequence is EANGEENRDGTNSNYSDNHGKEGLGG.

It belongs to the glycosyl hydrolase 13 family.

The enzyme catalyses Hydrolysis of (1-&gt;6)-alpha-D-glucosidic linkages to branches with degrees of polymerization of three or four glucose residues in limit dextrin.. It participates in glycan degradation; glycogen degradation. Its function is as follows. Removes maltotriose and maltotetraose chains that are attached by 1,6-alpha-linkage to the limit dextrin main chain, generating a debranched limit dextrin. The sequence is that of Glycogen debranching enzyme from Salmonella choleraesuis (strain SC-B67).